The sequence spans 70 residues: uncharacterized protein (70 aa).

Residues 50–70 (FYLLVFFIILWVSREAFFYLI) form a helical membrane-spanning segment.

The protein belongs to the M.jannaschii MJ0023/MJ0349/MJ1072/MJ1074/MJ1107/MJECL16 family.

It localises to the membrane. This is an uncharacterized protein from Methanocaldococcus jannaschii (strain ATCC 43067 / DSM 2661 / JAL-1 / JCM 10045 / NBRC 100440) (Methanococcus jannaschii).